The sequence spans 848 residues: Protein MEI2-like 2 (848 aa).

RRM domains lie at 197-270 and 282-355; these read RTLF…FSIP and GTLV…PSRP. Disordered stretches follow at residues 370-400, 455-523, and 826-848; these read IDQDEPRSYRIPHVGSPIASSPPGAWAQYSS, NQPH…SQGQ, and ATGDPFGNEEDNNQNERTAGEEL.

Probable RNA-binding protein that may play a role in growth regulation. This is Protein MEI2-like 2 (ML2) from Oryza sativa subsp. japonica (Rice).